The chain runs to 192 residues: Elongation factor P (192 aa).

An N6-(3,6-diaminohexanoyl)-5-hydroxylysine modification is found at lysine 37.

The protein belongs to the elongation factor P family. May be beta-lysylated on the epsilon-amino group of Lys-37 by the combined action of EpmA and EpmB, and then hydroxylated on the C5 position of the same residue by EpmC (if this protein is present). Lysylation is critical for the stimulatory effect of EF-P on peptide-bond formation. The lysylation moiety may extend toward the peptidyltransferase center and stabilize the terminal 3-CCA end of the tRNA. Hydroxylation of the C5 position on Lys-37 may allow additional potential stabilizing hydrogen-bond interactions with the P-tRNA.

The protein resides in the cytoplasm. It participates in protein biosynthesis; polypeptide chain elongation. Involved in peptide bond synthesis. Alleviates ribosome stalling that occurs when 3 or more consecutive Pro residues or the sequence PPG is present in a protein, possibly by augmenting the peptidyl transferase activity of the ribosome. Modification of Lys-37 is required for alleviation. In Acinetobacter baylyi (strain ATCC 33305 / BD413 / ADP1), this protein is Elongation factor P.